Consider the following 220-residue polypeptide: Glycerol-3-phosphate acyltransferase (220 aa).

A run of 6 helical transmembrane segments spans residues I11 to L31, L70 to F90, L96 to F116, G127 to V147, I153 to P173, and M193 to A213.

The protein belongs to the PlsY family. Probably interacts with PlsX.

Its subcellular location is the cell inner membrane. The enzyme catalyses an acyl phosphate + sn-glycerol 3-phosphate = a 1-acyl-sn-glycero-3-phosphate + phosphate. It functions in the pathway lipid metabolism; phospholipid metabolism. Catalyzes the transfer of an acyl group from acyl-phosphate (acyl-PO(4)) to glycerol-3-phosphate (G3P) to form lysophosphatidic acid (LPA). This enzyme utilizes acyl-phosphate as fatty acyl donor, but not acyl-CoA or acyl-ACP. This Helicobacter pylori (strain HPAG1) protein is Glycerol-3-phosphate acyltransferase.